The primary structure comprises 416 residues: Diaminobutyrate--2-oxoglutarate transaminase (416 aa).

K263 bears the N6-(pyridoxal phosphate)lysine mark.

This sequence belongs to the class-III pyridoxal-phosphate-dependent aminotransferase family. Pyridoxal 5'-phosphate is required as a cofactor.

The catalysed reaction is L-2,4-diaminobutanoate + 2-oxoglutarate = L-aspartate 4-semialdehyde + L-glutamate. It participates in amine and polyamine biosynthesis; ectoine biosynthesis; L-ectoine from L-aspartate 4-semialdehyde: step 1/3. Functionally, catalyzes reversively the conversion of L-aspartate beta-semialdehyde (ASA) to L-2,4-diaminobutyrate (DABA) by transamination with L-glutamate. This is Diaminobutyrate--2-oxoglutarate transaminase (ectB) from Virgibacillus pantothenticus.